Consider the following 51-residue polypeptide: Basic phospholipase A2 Bfon11 (51 aa).

The Ca(2+) site is built by Tyr27, Gly29, and Gly31. Cys28 and Cys43 form a disulfide bridge. The active site involves His46. Position 47 (Asp47) interacts with Ca(2+).

This sequence belongs to the phospholipase A2 family. Group II subfamily. D49 sub-subfamily. It depends on Ca(2+) as a cofactor. As to expression, expressed by the venom gland.

The protein localises to the secreted. It catalyses the reaction a 1,2-diacyl-sn-glycero-3-phosphocholine + H2O = a 1-acyl-sn-glycero-3-phosphocholine + a fatty acid + H(+). Functionally, snake venom phospholipase A2 (PLA2) that impairs hemostasis. PLA2 catalyzes the calcium-dependent hydrolysis of the 2-acyl groups in 3-sn-phosphoglycerides. This chain is Basic phospholipase A2 Bfon11, found in Bothrops fonsecai (Fonseca's lancehead).